We begin with the raw amino-acid sequence, 236 residues long: ATP synthase subunit a (236 aa).

Helical transmembrane passes span 18 to 38 (STVM…FIST), 79 to 99 (GITL…FSIV), 112 to 132 (DPTV…FYGV), 174 to 194 (IYAG…GAVG), and 205 to 227 (WQGF…TMVY).

The protein belongs to the ATPase A chain family. In terms of assembly, F-type ATPases have 2 components, CF(1) - the catalytic core - and CF(0) - the membrane proton channel. CF(1) has five subunits: alpha(3), beta(3), gamma(1), delta(1), epsilon(1). CF(0) has three main subunits: a(1), b(2) and c(9-12). The alpha and beta chains form an alternating ring which encloses part of the gamma chain. CF(1) is attached to CF(0) by a central stalk formed by the gamma and epsilon chains, while a peripheral stalk is formed by the delta and b chains.

It is found in the cell membrane. In terms of biological role, key component of the proton channel; it plays a direct role in the translocation of protons across the membrane. This is ATP synthase subunit a from Lysinibacillus sphaericus (strain C3-41).